A 909-amino-acid chain; its full sequence is Protein translocase subunit SecA (909 aa).

ATP is bound by residues Gln87 and 105-109 (GEGKT). Residues 246 to 265 (LEQQEKEDEEGKNGDGDYTI) are disordered. Residues 254–265 (EEGKNGDGDYTI) show a composition bias toward basic and acidic residues. An ATP-binding site is contributed by Asp512. Over residues 834–858 (ESDVEAVEEQRRQADEQPKQYEHET) the composition is skewed to basic and acidic residues. Residues 834 to 899 (ESDVEAVEEQ…NDPCPCGSGL (66 aa)) form a disordered region. The segment covering 859–875 (ASATQAPEQAPEAAPAA) has biased composition (low complexity). The Zn(2+) site is built by Cys893, Cys895, Cys904, and His905.

Belongs to the SecA family. As to quaternary structure, monomer and homodimer. Part of the essential Sec protein translocation apparatus which comprises SecA, SecYEG and auxiliary proteins SecDF-YajC and YidC. Zn(2+) serves as cofactor.

The protein resides in the cell inner membrane. It is found in the cytoplasm. The enzyme catalyses ATP + H2O + cellular proteinSide 1 = ADP + phosphate + cellular proteinSide 2.. Part of the Sec protein translocase complex. Interacts with the SecYEG preprotein conducting channel. Has a central role in coupling the hydrolysis of ATP to the transfer of proteins into and across the cell membrane, serving both as a receptor for the preprotein-SecB complex and as an ATP-driven molecular motor driving the stepwise translocation of polypeptide chains across the membrane. In Pseudoalteromonas atlantica (strain T6c / ATCC BAA-1087), this protein is Protein translocase subunit SecA.